Here is a 340-residue protein sequence, read N- to C-terminus: tRNA N6-adenosine threonylcarbamoyltransferase (340 aa).

Histidine 115 and histidine 119 together coordinate Fe cation. Substrate is bound by residues 138–142, aspartate 171, glycine 184, aspartate 188, and asparagine 278; that span reads VVSGG. Residue aspartate 306 participates in Fe cation binding.

This sequence belongs to the KAE1 / TsaD family. Requires Fe(2+) as cofactor.

The protein localises to the cytoplasm. It catalyses the reaction L-threonylcarbamoyladenylate + adenosine(37) in tRNA = N(6)-L-threonylcarbamoyladenosine(37) in tRNA + AMP + H(+). Required for the formation of a threonylcarbamoyl group on adenosine at position 37 (t(6)A37) in tRNAs that read codons beginning with adenine. Is involved in the transfer of the threonylcarbamoyl moiety of threonylcarbamoyl-AMP (TC-AMP) to the N6 group of A37, together with TsaE and TsaB. TsaD likely plays a direct catalytic role in this reaction. The sequence is that of tRNA N6-adenosine threonylcarbamoyltransferase from Clostridium botulinum (strain Hall / ATCC 3502 / NCTC 13319 / Type A).